Consider the following 869-residue polypeptide: DNA mismatch repair protein MutS (869 aa).

Residue 602-609 (GPNMSGKS) participates in ATP binding.

It belongs to the DNA mismatch repair MutS family.

This protein is involved in the repair of mismatches in DNA. It is possible that it carries out the mismatch recognition step. This protein has a weak ATPase activity. The chain is DNA mismatch repair protein MutS from Bacillus licheniformis (strain ATCC 14580 / DSM 13 / JCM 2505 / CCUG 7422 / NBRC 12200 / NCIMB 9375 / NCTC 10341 / NRRL NRS-1264 / Gibson 46).